The primary structure comprises 71 residues: Peptide Ctri10261 (71 aa).

The first 23 residues, Met1–Ala23, serve as a signal peptide directing secretion. Phenylalanine amide is present on Phe37. A propeptide spanning residues Ser41–Tyr71 is cleaved from the precursor.

The protein belongs to the non-disulfide-bridged peptide (NDBP) superfamily. Short antimicrobial peptide (group 4) family. In terms of tissue distribution, expressed by the venom gland.

It is found in the secreted. In terms of biological role, antimicrobial peptide. This chain is Peptide Ctri10261, found in Chaerilus tricostatus (Scorpion).